A 351-amino-acid chain; its full sequence is Phosphoribosylformylglycinamidine cyclo-ligase (351 aa).

The protein belongs to the AIR synthase family.

It localises to the cytoplasm. It carries out the reaction 2-formamido-N(1)-(5-O-phospho-beta-D-ribosyl)acetamidine + ATP = 5-amino-1-(5-phospho-beta-D-ribosyl)imidazole + ADP + phosphate + H(+). It functions in the pathway purine metabolism; IMP biosynthesis via de novo pathway; 5-amino-1-(5-phospho-D-ribosyl)imidazole from N(2)-formyl-N(1)-(5-phospho-D-ribosyl)glycinamide: step 2/2. This is Phosphoribosylformylglycinamidine cyclo-ligase from Lysinibacillus sphaericus (strain C3-41).